A 358-amino-acid chain; its full sequence is Microbial Terpene synthase-like protein 13 (358 aa).

Belongs to the terpene synthase family.

In terms of biological role, no terpene synthase activity detected in vitro. In Selaginella moellendorffii (Spikemoss), this protein is Microbial Terpene synthase-like protein 13.